A 416-amino-acid polypeptide reads, in one-letter code: UV excision repair protein RAD23 homolog B (416 aa).

In terms of domain architecture, Ubiquitin-like spans M1–A79. The segment covering A83–P111 has biased composition (low complexity). A disordered region spans residues A83 to N175. Over residues A112–S121 the composition is skewed to pro residues. The span at T122–T143 shows a compositional bias: low complexity. The residue at position 155 (T155) is a Phosphothreonine. A phosphoserine mark is found at S160 and S174. T186 is subject to Phosphothreonine. The UBA 1 domain maps to Q188–G228. Phosphoserine is present on S199. Y202 is subject to Phosphotyrosine. The region spanning H274–I317 is the STI1 domain. The interval Q333–I356 is disordered. The span at S337–I356 shows a compositional bias: gly residues. In terms of domain architecture, UBA 2 spans P371 to Q411.

Belongs to the RAD23 family. As to quaternary structure, component of the XPC complex composed of XPC, RAD23B and CETN2. Interacts with NGLY1 and PSMC1. Interacts with ATXN3. Interacts with AMFR. Interacts with VCP; the interaction is indirect and mediated by NGLY1.

It localises to the nucleus. It is found in the cytoplasm. Its function is as follows. Multiubiquitin chain receptor involved in modulation of proteasomal degradation. Binds to polyubiquitin chains. Proposed to be capable to bind simultaneously to the 26S proteasome and to polyubiquitinated substrates and to deliver ubiquitinated proteins to the proteasome. May play a role in endoplasmic reticulum-associated degradation (ERAD) of misfolded glycoproteins by association with PNGase and delivering deglycosylated proteins to the proteasome. Involved in global genome nucleotide excision repair (GG-NER) by acting as component of the XPC complex. Cooperatively with Cetn2 appears to stabilize Xpc. May protect Xpc from proteasomal degradation. In terms of biological role, the XPC complex is proposed to represent the first factor bound at the sites of DNA damage and together with other core recognition factors, Xpa, RPA and the TFIIH complex, is part of the pre-incision (or initial recognition) complex. The XPC complex recognizes a wide spectrum of damaged DNA characterized by distortions of the DNA helix such as single-stranded loops, mismatched bubbles or single-stranded overhangs. The orientation of XPC complex binding appears to be crucial for inducing a productive NER. XPC complex is proposed to recognize and to interact with unpaired bases on the undamaged DNA strand which is followed by recruitment of the TFIIH complex and subsequent scanning for lesions in the opposite strand in a 5'-to-3' direction by the NER machinery. Cyclobutane pyrimidine dimers (CPDs) which are formed upon UV-induced DNA damage esacpe detection by the XPC complex due to a low degree of structural perurbation. Instead they are detected by the UV-DDB complex which in turn recruits and cooperates with the XPC complex in the respective DNA repair. In vitro, the Xpc:Rad23b dimer is sufficient to initiate NER; it preferentially binds to cisplatin and UV-damaged double-stranded DNA and also binds to a variety of chemically and structurally diverse DNA adducts. Xpc:Rad23b contacts DNA both 5' and 3' of a cisplatin lesion with a preference for the 5' side. Xpc:Rad23bB induces a bend in DNA upon binding. Xpc:Rad23b stimulates the activity of DNA glycosylases Tdg and Smug1. The polypeptide is UV excision repair protein RAD23 homolog B (Rad23b) (Mus musculus (Mouse)).